The primary structure comprises 185 residues: Probable nicotinate-nucleotide adenylyltransferase (185 aa).

The protein belongs to the NadD family.

The enzyme catalyses nicotinate beta-D-ribonucleotide + ATP + H(+) = deamido-NAD(+) + diphosphate. The protein operates within cofactor biosynthesis; NAD(+) biosynthesis; deamido-NAD(+) from nicotinate D-ribonucleotide: step 1/1. Catalyzes the reversible adenylation of nicotinate mononucleotide (NaMN) to nicotinic acid adenine dinucleotide (NaAD). This Cereibacter sphaeroides (strain ATCC 17025 / ATH 2.4.3) (Rhodobacter sphaeroides) protein is Probable nicotinate-nucleotide adenylyltransferase.